Here is a 294-residue protein sequence, read N- to C-terminus: MTAEEYAAAQAAITAGLATYVQRFASLFVGPALAVGEWLRLLQVLFPEIQRRYADAAALGRDFYDSQRALHHPELPRNERFRGELRWEWFVQNMEPARKEMSQADSPPSATSKLALAAVREVEMAARRQIIGAVKNDPAPQIVQGWARVATGRETCAWCLMLISRGAELNHKGNFAYSSAEAAGLNLDDETVIDLWNESGHDLEKFREETREDFEKWHAGCDCLVVPVFDVQNWPGRDAALRAQQLWIEASDEADDLIASGKARSKNKNTETLNALRRRLARGEITMSNYALAA.

In Mycobacterium phage L5 (Mycobacteriophage L5), this protein is Gene 15 protein (15).